A 549-amino-acid polypeptide reads, in one-letter code: Undecaprenyl phosphate-alpha-4-amino-4-deoxy-L-arabinose arabinosyl transferase 1 (549 aa).

The next 12 membrane-spanning stretches (helical) occupy residues 9–29, 80–102, 112–132, 133–153, 176–196, 204–224, 257–277, 290–310, 312–332, 342–362, 377–397, and 402–422; these read LLLI…GLWI, LFGV…YLLA, SLAS…AGYA, NLDP…WFTF, FMTK…PYAI, LLIY…PWAL, WWYY…LLPA, SSGF…LSKG, LPAY…NTLV, LLAF…LALV, HLVL…LQAM, and LWAA…AALP.

This sequence belongs to the glycosyltransferase 83 family.

The protein resides in the cell inner membrane. The catalysed reaction is 4-amino-4-deoxy-alpha-L-arabinopyranosyl di-trans,octa-cis-undecaprenyl phosphate + lipid IVA = lipid IIA + di-trans,octa-cis-undecaprenyl phosphate.. It participates in lipopolysaccharide metabolism; 4-amino-4-deoxy-beta-L-arabinose-lipid A biosynthesis. Its function is as follows. Catalyzes the transfer of the L-Ara4N moiety of the glycolipid undecaprenyl phosphate-alpha-L-Ara4N to lipid A. The modified arabinose is attached to lipid A and is required for resistance to polymyxin and cationic antimicrobial peptides. In Pseudomonas fluorescens (strain ATCC BAA-477 / NRRL B-23932 / Pf-5), this protein is Undecaprenyl phosphate-alpha-4-amino-4-deoxy-L-arabinose arabinosyl transferase 1.